Here is a 148-residue protein sequence, read N- to C-terminus: uncharacterized protein (148 aa).

The interval Gln83–Ser148 is disordered. Basic residues-rich tracts occupy residues Ala92 to Val103 and Lys113 to Ser124.

This is an uncharacterized protein from Mycoplasma genitalium (strain ATCC 33530 / DSM 19775 / NCTC 10195 / G37) (Mycoplasmoides genitalium).